The primary structure comprises 217 residues: Somatotropin (217 aa).

An N-terminal signal peptide occupies residues 1 to 27 (MMAAGPRTSLLLAFALLCLPWTQMVGA). His46 provides a ligand contact to Zn(2+). Residues Cys79 and Cys190 are joined by a disulfide bond. Residue Ser132 is modified to Phosphoserine. Glu199 serves as a coordination point for Zn(2+). A disulfide bridge connects residues Cys207 and Cys215.

Belongs to the somatotropin/prolactin family.

The protein localises to the secreted. Functionally, plays an important role in growth control. Its major role in stimulating body growth is to stimulate the liver and other tissues to secrete IGF1. It stimulates both the differentiation and proliferation of myoblasts. It also stimulates amino acid uptake and protein synthesis in muscle and other tissues. The protein is Somatotropin (GH1) of Giraffa camelopardalis (Giraffe).